A 124-amino-acid chain; its full sequence is Putative iron-sulfur cluster insertion protein ErpA (124 aa).

Iron-sulfur cluster is bound by residues cysteine 52, cysteine 116, and cysteine 118.

Belongs to the HesB/IscA family. As to quaternary structure, homodimer. Requires iron-sulfur cluster as cofactor.

Its function is as follows. Required for insertion of 4Fe-4S clusters. This chain is Putative iron-sulfur cluster insertion protein ErpA, found in Ralstonia pickettii (strain 12J).